The following is a 403-amino-acid chain: L-lactate oxidase (403 aa).

Residues 21 to 375 (EGSVDFVNVF…KHFKLRHNPY (355 aa)) form the FMN hydroxy acid dehydrogenase domain. Y47 is a pyruvate binding site. FMN-binding positions include 99–101 (PVA), S128, and Q150. Residue Y152 coordinates pyruvate. T178 is a binding site for FMN. Pyruvate-binding residues include R187 and Y220. Residue K246 coordinates FMN. 2 residues coordinate pyruvate: H270 and R273. The Proton acceptor role is filled by H270. Residues 301–305 (DSGVR) and R325 each bind FMN.

The protein belongs to the FMN-dependent alpha-hydroxy acid dehydrogenase family. In terms of assembly, homotetramer. Requires FMN as cofactor.

It carries out the reaction (S)-lactate + O2 = pyruvate + H2O2. In terms of biological role, catalyzes the oxidation of (S)-lactate (L-lactate) to pyruvate, with a reduction of O2 to H2O2. Is likely involved in the L-lactate aerobic metabolism of S.iniae that enables the bacterium to utilize L-lactate as an energy source for growth under aerobic conditions in the absence (or at low concentrations) of glucose. In Streptococcus iniae (Streptococcus shiloi), this protein is L-lactate oxidase.